The primary structure comprises 295 residues: MSKQVGSDRVKRGMAEMQKGGVIMDVVNAEQAKIAEEAGAVAVMALERVPSDIRAAGGVARACNPKIVQEVMDAVSIPVMAKCRIGHITEARVLESMGVDYIDESEVLTPADEEYHLLKSDYTVPFVCGCRNLGEAARRIGEGAAMLRTKGEPGTGNIVEAVRHMRQVNSEVAKLTVMPDDEIMTFAKEIGAPYEVLKSIKDNGRLPVVNFAAGGVATPQDAALMMQLGADGVFVGSGIFKSEDPEKFAKAIVQATTHYTDYELIGKLAQELGEAMRGLDVNQLSLEERMQERGW.

D25 contacts D-ribose 5-phosphate. K82 (schiff-base intermediate with D-ribose 5-phosphate) is an active-site residue. G154 is a D-ribose 5-phosphate binding site. R166 contacts D-glyceraldehyde 3-phosphate. D-ribose 5-phosphate contacts are provided by residues G215 and 236–237 (GS).

It belongs to the PdxS/SNZ family. In the presence of PdxT, forms a dodecamer of heterodimers.

It catalyses the reaction aldehydo-D-ribose 5-phosphate + D-glyceraldehyde 3-phosphate + L-glutamine = pyridoxal 5'-phosphate + L-glutamate + phosphate + 3 H2O + H(+). Its pathway is cofactor biosynthesis; pyridoxal 5'-phosphate biosynthesis. Catalyzes the formation of pyridoxal 5'-phosphate from ribose 5-phosphate (RBP), glyceraldehyde 3-phosphate (G3P) and ammonia. The ammonia is provided by the PdxT subunit. Can also use ribulose 5-phosphate and dihydroxyacetone phosphate as substrates, resulting from enzyme-catalyzed isomerization of RBP and G3P, respectively. This Staphylococcus carnosus (strain TM300) protein is Pyridoxal 5'-phosphate synthase subunit PdxS.